A 248-amino-acid chain; its full sequence is Thioredoxin-like protein AAED1, chloroplastic (248 aa).

Residues 1–52 (MAIALSSSSTITSITLQPKLKTIHGLGTVLPGYSVKSHFRSVSLRRSAVVVS) constitute a chloroplast transit peptide. At Ala-53 the chain carries N-acetylalanine.

It belongs to the peroxiredoxin-like PRXL2 family. PRXL2C subfamily.

It localises to the plastid. The protein resides in the chloroplast. The polypeptide is Thioredoxin-like protein AAED1, chloroplastic (Arabidopsis thaliana (Mouse-ear cress)).